The chain runs to 107 residues: uncharacterized protein (107 aa).

Residues 80-98 show a composition bias toward polar residues; it reads SIDNLKPTSHQNGTTNDTA. The tract at residues 80–107 is disordered; that stretch reads SIDNLKPTSHQNGTTNDTATMDHLEKNE.

This is an uncharacterized protein from Human spumaretrovirus (SFVcpz(hu)).